A 180-amino-acid chain; its full sequence is 5'(3')-deoxyribonucleotidase (180 aa).

The active-site Nucleophile is the Asp9. Mg(2+) is bound by residues Asp9, Asp11, and Asp134. Asp11 serves as the catalytic Proton donor.

Belongs to the 5'(3')-deoxyribonucleotidase family. Mg(2+) is required as a cofactor.

Its function is as follows. Dephosphorylates nucleoside monophosphates such as the 5' and 2'(3')-phosphates of deoxyribonucleotides in vitro. This Clostridium acetobutylicum (strain ATCC 824 / DSM 792 / JCM 1419 / IAM 19013 / LMG 5710 / NBRC 13948 / NRRL B-527 / VKM B-1787 / 2291 / W) protein is 5'(3')-deoxyribonucleotidase.